A 573-amino-acid chain; its full sequence is Acyl-coenzyme A synthetase ACSM1, mitochondrial (573 aa).

Residues 1-35 (MQWLKSFQICKVLQGFSLSPTQLHRRLFSRVGAPR) constitute a mitochondrion transit peptide. Lys-81 is subject to N6-succinyllysine. Lys-142 is subject to N6-acetyllysine; alternate. Residue Lys-142 is modified to N6-succinyllysine; alternate. Position 179 is an N6-succinyllysine (Lys-179). Lys-200 is modified (N6-acetyllysine; alternate). The residue at position 200 (Lys-200) is an N6-succinyllysine; alternate. Lys-210 carries the post-translational modification N6-acetyllysine. An ATP-binding site is contributed by 222–230 (TSGTTGYPK). N6-succinyllysine is present on residues Lys-233 and Lys-324. An N6-acetyllysine; alternate mark is found at Lys-352 and Lys-387. N6-succinyllysine; alternate is present on residues Lys-352 and Lys-387. ATP contacts are provided by Asp-448 and Arg-463. Residue Lys-501 is modified to N6-succinyllysine. Lys-527 carries the N6-acetyllysine modification. N6-acetyllysine; alternate is present on Lys-534. Lys-534 carries the N6-succinyllysine; alternate modification. Lys-545 is subject to N6-acetyllysine. Position 559 (Lys-559) interacts with ATP.

It belongs to the ATP-dependent AMP-binding enzyme family. As to quaternary structure, monomer. Mg(2+) is required as a cofactor. The cofactor is Mn(2+). As to expression, highly expressed in liver and kidney.

The protein localises to the mitochondrion matrix. The protein resides in the mitochondrion. It carries out the reaction a medium-chain fatty acid + ATP + CoA = a medium-chain fatty acyl-CoA + AMP + diphosphate. The catalysed reaction is benzoate + ATP + CoA = benzoyl-CoA + AMP + diphosphate. It catalyses the reaction (R)-lipoate + GTP + H(+) = (R)-lipoyl-GMP + diphosphate. The enzyme catalyses octanoate + ATP + CoA = octanoyl-CoA + AMP + diphosphate. It carries out the reaction decanoate + ATP + CoA = decanoyl-CoA + AMP + diphosphate. The catalysed reaction is dodecanoate + ATP + CoA = dodecanoyl-CoA + AMP + diphosphate. It catalyses the reaction tetradecanoate + ATP + CoA = tetradecanoyl-CoA + AMP + diphosphate. The enzyme catalyses hexanoate + ATP + CoA = hexanoyl-CoA + AMP + diphosphate. It carries out the reaction butanoate + ATP + CoA = butanoyl-CoA + AMP + diphosphate. The catalysed reaction is hexadecanoate + ATP + CoA = hexadecanoyl-CoA + AMP + diphosphate. In terms of biological role, catalyzes the activation of fatty acids by CoA to produce an acyl-CoA, the first step in fatty acid metabolism. Capable of activating medium-chain fatty acids (e.g. butyric (C4) to decanoic (C10) acids), and certain carboxylate-containing xenobiotics, e.g. benzoate. Also catalyzes the activation of lipoate to lipoyl-nucleoside monophosphate. Activates lipoate with GTP at a 1000-fold higher rate than with ATP and activates both (R)- and (S)-lipoate to the respective lipoyl-GMP, with a preference for (R)-lipoate. The polypeptide is Acyl-coenzyme A synthetase ACSM1, mitochondrial (Acsm1) (Mus musculus (Mouse)).